Reading from the N-terminus, the 707-residue chain is Alpha-hemolysin translocation ATP-binding protein HlyB (707 aa).

Residues Ser3–Ile125 enclose the Peptidase C39 domain. His83 is an active-site residue. Positions Phe154–Gln436 constitute an ABC transmembrane type-1 domain. A run of 5 helical transmembrane segments spans residues Leu158–Val178, Leu191–Leu211, Ala269–Tyr289, Leu295–Leu315, and Val388–Gly408. The ABC transporter domain maps to Ile468–Gln703. Gly502–Ser509 is an ATP binding site.

This sequence belongs to the ABC transporter superfamily. Protein-1 exporter (TC 3.A.1.109) family. Homodimer.

The protein localises to the cell inner membrane. Its function is as follows. Part of the ABC transporter complex HlyBD involved in hemolysin export. Transmembrane domains (TMD) form a pore in the inner membrane and the ATP-binding domain (NBD) is responsible for energy generation. The polypeptide is Alpha-hemolysin translocation ATP-binding protein HlyB (hlyB) (Escherichia coli).